We begin with the raw amino-acid sequence, 273 residues long: Flagellin FljN (273 aa).

It belongs to the bacterial flagellin family. In C.crescentus, the flagellar filament is composed of multiple flagellins of 29 kDa; 27 kDa and 25 kDa.

It is found in the secreted. The protein localises to the bacterial flagellum. Flagellin is the subunit protein which polymerizes to form the filaments of bacterial flagella. The chain is Flagellin FljN (fljN) from Caulobacter vibrioides (strain ATCC 19089 / CIP 103742 / CB 15) (Caulobacter crescentus).